The chain runs to 106 residues: Large ribosomal subunit protein P2 (106 aa).

The segment at G79–D106 is disordered. A compositionally biased stretch (acidic residues) spans P91–M100.

It belongs to the eukaryotic ribosomal protein P1/P2 family. As to quaternary structure, P1 and P2 exist as dimers at the large ribosomal subunit. In terms of processing, phosphorylated.

Its function is as follows. Plays an important role in the elongation step of protein synthesis. The protein is Large ribosomal subunit protein P2 (LIP) of Leishmania infantum.